The sequence spans 612 residues: Proton channel OTOP1 (612 aa).

The span at 1–46 (MLEGLGSPASPRAAASASVAGSSGPAACSPPSSSAPRSPESPAPRR) shows a compositional bias: low complexity. The interval 1 to 50 (MLEGLGSPASPRAAASASVAGSSGPAACSPPSSSAPRSPESPAPRRGGVR) is disordered. The Cytoplasmic portion of the chain corresponds to 1 to 58 (MLEGLGSPASPRAAASASVAGSSGPAACSPPSSSAPRSPESPAPRRGGVRASVPQKLA). A helical membrane pass occupies residues 59–80 (EMLSSQYGLIVFVAGLLLLLAW). Residues 81–88 (AVHAAGVS) are Extracellular-facing. The helical transmembrane segment at 89 to 112 (KSDLLCFLTALMLLQLLWMLWYVG) threads the bilayer. At 113-130 (RSSAHRRLFRLKDTHAGA) the chain is on the cytoplasmic side. A helical transmembrane segment spans residues 131–153 (GWLRGSITLFAVITVILGCLKIG). The Extracellular portion of the chain corresponds to 154–163 (YFIGFSECLS). Residues 164 to 188 (ATEGVFPVTHSVHTLLQVYFLWGHA) form a helical membrane-spanning segment. The Cytoplasmic segment spans residues 189-196 (KDIIQSFK). A helical membrane pass occupies residues 197–223 (TLERFGVIHSVFTNLLLWANGVLNESK). The Extracellular portion of the chain corresponds to 224–264 (HQLNEHKERLITLGFGNITTVLDDHTPQCNCTPPTLCTAIS). The helical transmembrane segment at 265–290 (HGIYYLYPFNIEYQILASTMLYVLWK) threads the bilayer. Residues 291-311 (NIGRKVDSHQHQKMQFKSDGV) are Cytoplasmic-facing. A helical membrane pass occupies residues 312–334 (MVGAVLGLTVLAATIAVVVVYLI). Over 335-344 (HIGRSKTKSE) the chain is Extracellular. Residues 345-370 (SALIMFYLYAITLLMLMGAAGLAGIR) traverse the membrane as a helical segment. The Cytoplasmic portion of the chain corresponds to 371 to 388 (IYRIDEKSLDESKNPARK). Residues 389–413 (LDSDLLVGTASGSWLISWGSILAIL) form a helical membrane-spanning segment. Residues 414–423 (CAEGHPRYTW) lie on the Extracellular side of the membrane. Residues 424 to 444 (YNLPYSILAIVEKYIQNLFIF) form a helical membrane-spanning segment. Residues 445–544 (ESIHREPEKL…QGNAKRKVLR (100 aa)) lie on the Cytoplasmic side of the membrane. Residues 499–525 (ANGNVCMRESHDKEEEKQEESSWGGSP) are disordered. Basic and acidic residues predominate over residues 506 to 518 (RESHDKEEEKQEE). Residues 545–563 (NIAAFLFLCNISLWIPPAF) form a helical membrane-spanning segment. The Extracellular segment spans residues 564 to 581 (GCRPEYDNGLEEIVFGFE). Residues 582-605 (PWIIVVNLAMPFSIFYRMHAAASL) form a helical membrane-spanning segment. The Cytoplasmic segment spans residues 606 to 612 (FEVYCKI).

It belongs to the otopetrin family. In terms of assembly, homodimer. Interacts with STAT1, independently of STAT1 phosphorylation status.

It is found in the cell membrane. Its subcellular location is the cell projection. The protein localises to the microvillus. It catalyses the reaction H(+)(in) = H(+)(out). Its activity is regulated as follows. Activated by both acid and alkali, with proton influx in response to extracellular acid and proton efflux during alkali stimulation. Inhibited by Zn(2+); this inhibition is thought to be pH-sensitive. Currents evoked in response to mild acid (pH 6.0) stimulus may also be mildly potentiated by exposure to Zn(2+). Activated by NH(4)Cl. Its function is as follows. Proton-selective ion channel. Biphasically modulated by acid and alkali, mediating proton influx and efflux in response to extracellular acid and base stimulation, respectively. Sour taste receptor, which carries inward currents in response to extracellular acidification. Sensor for ammonium chloride (NH(4)Cl) in taste receptor cells. NH(4)Cl acts by increasing the intracellular pH, thereby generating a driving force for proton entry through OTOP1 channel. Might also participate in alkaline sensation. Plays a role in the regulation of Ca(2+) flux in response to purigenic (ATP, ADP and UDP) stimuli, leading to increase in cytosolic Ca(2+) due to influx of extracellular calcium. May play this role by inhibiting P2Y purinoceptor-mediated Ca(2+) release in a Ca(2+)-dependent manner and promote an influx of Ca(2+) in response to ATP. Through this mechanism and possibly others, plays a role in the formation and function of calcium carbonate-based structures in the vestibular system of the inner ear, called otoconia, that sense gravity and linear acceleration. In obesity, may attenuate adipose tissue inflammation, through the negative regulation of IFNG signaling, hence may play an adaptive role in the maintainance of metabolic homeostasis. Following alkali activation, may also be permeable Na(+), K(+), Cs(+) and Li(+). In Homo sapiens (Human), this protein is Proton channel OTOP1.